Consider the following 361-residue polypeptide: Protein RecA (361 aa).

77–84 (GPESSGKT) lines the ATP pocket.

It belongs to the RecA family.

It is found in the cytoplasm. Its function is as follows. Can catalyze the hydrolysis of ATP in the presence of single-stranded DNA, the ATP-dependent uptake of single-stranded DNA by duplex DNA, and the ATP-dependent hybridization of homologous single-stranded DNAs. It interacts with LexA causing its activation and leading to its autocatalytic cleavage. This chain is Protein RecA, found in Sinorhizobium medicae (strain WSM419) (Ensifer medicae).